We begin with the raw amino-acid sequence, 165 residues long: Pro-MCH (165 aa).

A signal peptide spans 1 to 21 (MAKMNLSSYILILTFSLFSQG). I143 carries the post-translational modification Isoleucine amide. Residues C153 and C162 are joined by a disulfide bond.

The protein belongs to the melanin-concentrating hormone family. Post-translationally, differentially processed in the brain and in peripheral organs producing two neuropeptides; NEI and MCH. A third peptide, NGE, may also be produced. Preferential processing in neurons by prohormone convertase 2 (PC2) generates NEI. MCH is generated in neurons of the lateral hypothalmic area by several prohormone convertases including PC1/3, PC2 and PC5/6. Predominantly expressed in lateral hypothalamus, also detected in pallidum, neocortex and cerebellum. Also found in thymus, brown adipose tissue, duodenum and testis (spermatogonia, early spermatocytes and Sertoli cells). No expression in peripheral blood. In brain exclusively mature MCH and NEI peptides are present. In peripheral tissues a large product, encompassing the NEI and MCH domains of the precursor, is found predominantly.

It is found in the secreted. MCH may act as a neurotransmitter or neuromodulator in a broad array of neuronal functions directed toward the regulation of goal-directed behavior, such as food intake, and general arousal. May also have a role in spermatocyte differentiation. The sequence is that of Pro-MCH (PMCH) from Homo sapiens (Human).